The sequence spans 453 residues: Ankyrin repeat and SOCS box protein 16 (453 aa).

ANK repeat units follow at residues 56–85, 110–139, 142–171, 175–204, 209–238, 242–279, and 283–312; these read CRDP…AANM, KQTA…ELDA, GGRA…KANV, EGMT…SVNV, SEVT…DVAL, QGET…DPQA, and KRHT…SPGV. An SOCS box domain is found at 397–453; it reads FYSSALSMENQPRQLQHLARLAVRAQLGSHCRQAAAQLPLPPLLRDYLLLGVEGRIQ.

Belongs to the ankyrin SOCS box (ASB) family.

It functions in the pathway protein modification; protein ubiquitination. Its function is as follows. May be a substrate-recognition component of a SCF-like ECS (Elongin-Cullin-SOCS-box protein) E3 ubiquitin-protein ligase complex which mediates the ubiquitination and subsequent proteasomal degradation of target proteins. The polypeptide is Ankyrin repeat and SOCS box protein 16 (Asb16) (Mus musculus (Mouse)).